The following is a 396-amino-acid chain: Adenosine 3'-phospho 5'-phosphosulfate transporter 2 (396 aa).

Residues 22 to 42 are disordered; sequence NGGESAGNSPPSQRKSSTSES. The segment covering 27 to 42 has biased composition (polar residues); that stretch reads AGNSPPSQRKSSTSES. A phosphoserine mark is found at Ser37 and Ser40. Asn57 carries an N-linked (GlcNAc...) asparagine glycan. The next 10 helical transmembrane spans lie at 66–86, 91–111, 140–160, 163–183, 189–209, 216–236, 253–273, 290–310, 318–338, and 342–362; these read CAGV…IFTV, PYGW…GLVE, LILA…LGYL, PTQV…SILI, GLLD…FTLA, NFNL…AAIG, VVFY…LVTG, FGYG…VLAL, IAAT…FVLF, and FTLQ…LNVY.

Belongs to the nucleotide-sugar transporter family. SLC35B subfamily.

It is found in the golgi apparatus membrane. Its function is as follows. Mediates the transport of adenosine 3'-phospho 5'-phosphosulfate (PAPS), from cytosol into Golgi. PAPS is a universal sulfuryl donor for sulfation events that take place in the Golgi. Essential for viability. Involved in glycosaminoglycan synthesis and the subsequent signaling. May be involved in hh and dpp signaling by controlling the sulfation of heparan sulfate (HS). In Drosophila melanogaster (Fruit fly), this protein is Adenosine 3'-phospho 5'-phosphosulfate transporter 2 (Papst2).